We begin with the raw amino-acid sequence, 374 residues long: Serpin B8 (374 aa).

Belongs to the serpin family. Ov-serpin subfamily.

It is found in the cytoplasm. Functionally, has an important role in epithelial desmosome-mediated cell-cell adhesion. In Bos taurus (Bovine), this protein is Serpin B8 (SERPINB8).